Reading from the N-terminus, the 655-residue chain is Large subunit GTPase 1 homolog (655 aa).

The disordered stretch occupies residues Met1–Asp31. The span at Leu16–Arg28 shows a compositional bias: basic residues. A phosphoserine mark is found at Ser93 and Ser97. Residues Trp164–Pro441 enclose the CP-type G domain. Asn212–Asp215 contacts GTP. Ser252 carries the post-translational modification Phosphoserine. Residues Lys253–His359 form a disordered region. The segment covering Glu288 to Gly327 has biased composition (acidic residues). Residues Gly328–Glu339 show a composition bias toward basic and acidic residues. Residues Gln344 to His359 are compositionally biased toward polar residues. Residues Gly390–Ser397 and Asp434–Gly437 contribute to the GTP site. Positions Ser625 to Val655 are disordered. Residues Pro633–Val655 are compositionally biased toward basic residues.

Belongs to the TRAFAC class YlqF/YawG GTPase family. LSG1 subfamily.

Its subcellular location is the cytoplasm. The protein resides in the endoplasmic reticulum. It is found in the nucleus. It localises to the cajal body. It carries out the reaction GTP + H2O = GDP + phosphate + H(+). Its function is as follows. Functions as a GTPase. May act by mediating the release of NMD3 from the 60S ribosomal subunit after export into the cytoplasm during the 60S ribosomal subunit maturation. The sequence is that of Large subunit GTPase 1 homolog from Rattus norvegicus (Rat).